A 338-amino-acid polypeptide reads, in one-letter code: Lipoate-protein ligase A (338 aa).

The BPL/LPL catalytic domain maps to 29–216; sequence PATQRVLFLW…AFFAHYGERV (188 aa). Residues Arg71, 76–79, and Lys134 contribute to the ATP site; that span reads GAVF. A (R)-lipoate-binding site is contributed by Lys134.

It belongs to the LplA family. As to quaternary structure, monomer.

The protein resides in the cytoplasm. It carries out the reaction L-lysyl-[lipoyl-carrier protein] + (R)-lipoate + ATP = N(6)-[(R)-lipoyl]-L-lysyl-[lipoyl-carrier protein] + AMP + diphosphate + H(+). Its pathway is protein modification; protein lipoylation via exogenous pathway; protein N(6)-(lipoyl)lysine from lipoate: step 1/2. The protein operates within protein modification; protein lipoylation via exogenous pathway; protein N(6)-(lipoyl)lysine from lipoate: step 2/2. Catalyzes both the ATP-dependent activation of exogenously supplied lipoate to lipoyl-AMP and the transfer of the activated lipoyl onto the lipoyl domains of lipoate-dependent enzymes. The sequence is that of Lipoate-protein ligase A from Escherichia coli O9:H4 (strain HS).